Here is a 130-residue protein sequence, read N- to C-terminus: Small ribosomal subunit protein uS9 (130 aa).

Belongs to the universal ribosomal protein uS9 family.

This is Small ribosomal subunit protein uS9 from Histophilus somni (strain 129Pt) (Haemophilus somnus).